We begin with the raw amino-acid sequence, 901 residues long: Quinate repressor protein (901 aa).

The interval 1-88 (MSILVRPPKR…DSLQTRRKFP (88 aa)) is sufficient for repression. Disordered stretches follow at residues 26–59 (LRDF…DGSR) and 878–901 (EEQG…GQPM). The span at 31–43 (QGNSASTPINTSA) shows a compositional bias: polar residues.

The protein in the N-terminal section; belongs to the shikimate kinase family. This sequence in the 2nd section; belongs to the type-I 3-dehydroquinase family. In the C-terminal section; belongs to the shikimate dehydrogenase family. As to quaternary structure, interacts with qutA; transcriptional activator of the quinate utilization pathway genes.

Functionally, multi-domain repressor protein that negatively regulates transcription of the quinate utilization pathway genes. May mediate its repressor activity by binding directly to the qutA activator protein. This is Quinate repressor protein (qutR) from Emericella nidulans (strain FGSC A4 / ATCC 38163 / CBS 112.46 / NRRL 194 / M139) (Aspergillus nidulans).